We begin with the raw amino-acid sequence, 1035 residues long: Teashirt homolog 2 (1035 aa).

A disordered region spans residues 1–92 (MPRRKQQAPK…ESLLSDASDQ (92 aa)). A coiled-coil region spans residues 13 to 42 (AGYAQEEQLKEEEEIKEEEEEEEDSGSVAQ). Acidic residues predominate over residues 21–37 (LKEEEEIKEEEEEEEDS). Polar residues-rich tracts occupy residues 39–49 (SVAQLQGSNDP) and 66–92 (SYQNSPGSHLSNQDAENESLLSDASDQ). A Glycyl lysine isopeptide (Lys-Gly) (interchain with G-Cter in SUMO2) cross-link involves residue K189. 2 consecutive C2H2-type zinc fingers follow at residues 216–240 (FRCRQCSAAYDTLVELTVHMNETGH) and 276–300 (LKCMFCGDSFDSLQDLSVHMIKTKH). The disordered stretch occupies residues 240 to 266 (HYQDDNRKKDKLRPTSYSKPRKRAFQD). Residues K307 and K316 each participate in a glycyl lysine isopeptide (Lys-Gly) (interchain with G-Cter in SUMO2) cross-link. The C2H2-type 3; atypical zinc-finger motif lies at 381-405 (LKCMECGSSHDTLQQLTTHMMVTGH). K418 is covalently cross-linked (Glycyl lysine isopeptide (Lys-Gly) (interchain with G-Cter in SUMO2)). A compositionally biased stretch (low complexity) spans 432-450 (SLSDAPSSDSLAPKPSSNS). The disordered stretch occupies residues 432-496 (SLSDAPSSDS…DPLQKPLDPA (65 aa)). Over residues 460-483 (ELKRESKKEKPEELRTDEKVLKSE) the composition is skewed to basic and acidic residues. Glycyl lysine isopeptide (Lys-Gly) (interchain with G-Cter in SUMO2) cross-links involve residues K462, K481, K498, and K602. Disordered stretches follow at residues 600–674 (QVKK…VEPV) and 764–791 (QPIDLTKSKSKKAESSQAQSCTSPPQKH). The segment covering 601-669 (VKKEPEDKEE…KDGGEKEKAQ (69 aa)) has biased composition (basic and acidic residues). Glycyl lysine isopeptide (Lys-Gly) (interchain with G-Cter in SUMO2) cross-links involve residues K801 and K821. Positions 842–912 (RKGRQSNWNP…NVKYQLRKTG (71 aa)) form a DNA-binding region, homeobox. The segment at 927–949 (FYCSDCASQFRTPSTYISHLESH) adopts a C2H2-type 4 zinc-finger fold. Low complexity predominate over residues 968–977 (VEQEISRVSS). Disordered regions lie at residues 968–987 (VEQEISRVSSAQRSPETIAG) and 1015–1035 (SKTHSKSPEHHAQFVTDVDEE). S981 bears the Phosphoserine mark. The C2H2-type 5 zinc-finger motif lies at 995-1018 (FKCKLCCRTFVSKHAVKLHLSKTH).

The protein belongs to the teashirt C2H2-type zinc-finger protein family. As to quaternary structure, interacts (via homeobox domain) with APBB1 (via PID domain 1). In terms of processing, sumoylated.

The protein resides in the nucleus. Its function is as follows. Probable transcriptional regulator involved in developmental processes. May act as a transcriptional repressor (Potential). This Sus scrofa (Pig) protein is Teashirt homolog 2 (TSHZ2).